The following is a 496-amino-acid chain: MARLRSMVQAGVARVEGFGLAGFSDEELYAIHTSTLEVLEYTGLKIESQEALEIFSEGGARVDFKTKVVKIPQYLVEDAIQSAPSTLVLAGRNPKNDIVLGGKRVGFINFGEGVSIIDPYTKEYRKTTRRDVANITRFCDAMDQMDAVLRPVAPQDIHPSVAVVHNAEVIFNNTSKHVFIGVEGGRNFKKVLKMAAAVAGGEDKLRERPLFSCNICPTSPLQIVNHASEVIIEGARAGIPVNMLSMGMSGATSAITLAGTLVTHNCEVLGAIVLSQLTSKGAPVLYGSSTTIMDMKNMTAPVGSPELGMINAGVAKLAQYYNLPSWVAGGOVDSKIPDAQASHEFTLTGFLTALAGANLIYGAGMLELGITFDYAQMLMDNEMARMIKKAVGGISVTDETLAVDVIKSVGTAGNFISEDHTYAHMRTQSQSKLVDRSMRENWLAAGAKDFTQRAYEEAISILENYTPEPLPEKIAATLRSIVEETEDEYGVARSLI.

Residue Pyl-331 is a non-standard amino acid, pyrrolysine.

The protein belongs to the trimethylamine methyltransferase family.

The enzyme catalyses Co(I)-[trimethylamine-specific corrinoid protein] + trimethylamine + H(+) = methyl-Co(III)-[trimethylamine-specific corrinoid protein] + dimethylamine. Functionally, catalyzes the transfer of a methyl group from trimethylamine to the corrinoid cofactor of MttC. This Desulfitobacterium hafniense (strain DSM 10664 / DCB-2) protein is Trimethylamine methyltransferase MttB.